The following is a 904-amino-acid chain: Essential for maintenance of the cell wall protein 1 (904 aa).

6 TPR repeats span residues 510 to 544 (WQLD…ETAL), 563 to 596 (INEN…GKYV), 603 to 636 (AKYY…YPLS), 637 to 670 (FETW…DPYH), 671 to 704 (ALSW…DAQK), and 706 to 739 (WKIW…RRDK).

Belongs to the TTC27 family.

It is found in the cytoplasm. The protein localises to the nucleus. In terms of biological role, required for the maintenance of the cell wall integrity. This is Essential for maintenance of the cell wall protein 1 (EMW1) from Saccharomyces cerevisiae (strain ATCC 204508 / S288c) (Baker's yeast).